The following is a 328-amino-acid chain: 7,8-didemethyl-8-hydroxy-5-deazariboflavin synthase (328 aa).

One can recognise a Radical SAM core domain in the interval 1 to 242; sequence MTYSRNIFIP…PDVSIQVPPN (242 aa). Cysteine 15, cysteine 19, and cysteine 22 together coordinate [4Fe-4S] cluster.

The protein belongs to the radical SAM superfamily. CofG family. As to quaternary structure, consists of two subunits, CofG and CofH. [4Fe-4S] cluster serves as cofactor.

It carries out the reaction 5-amino-5-(4-hydroxybenzyl)-6-(D-ribitylimino)-5,6-dihydrouracil + S-adenosyl-L-methionine = 7,8-didemethyl-8-hydroxy-5-deazariboflavin + 5'-deoxyadenosine + L-methionine + NH4(+) + H(+). It functions in the pathway cofactor biosynthesis; coenzyme F0 biosynthesis. Its function is as follows. Catalyzes the radical-mediated synthesis of 7,8-didemethyl-8-hydroxy-5-deazariboflavin from 5-amino-5-(4-hydroxybenzyl)-6-(D-ribitylimino)-5,6-dihydrouracil. This chain is 7,8-didemethyl-8-hydroxy-5-deazariboflavin synthase, found in Methanothermobacter thermautotrophicus (strain ATCC 29096 / DSM 1053 / JCM 10044 / NBRC 100330 / Delta H) (Methanobacterium thermoautotrophicum).